A 517-amino-acid polypeptide reads, in one-letter code: Cell division cycle protein 73 (517 aa).

The segment covering 124–135 (SEPEAKKPRLDG) has biased composition (basic and acidic residues). Disordered stretches follow at residues 124–159 (SEPE…SAAK) and 306–326 (GHHA…LAKP). Pro residues predominate over residues 315–324 (DAPPGRPPLA).

This sequence belongs to the CDC73 family. In terms of assembly, component of the PAF1 complex which consists of at least cdc-73, ctr-9, leo-1, pafo-1 and rtfo-1.

The protein localises to the nucleus. Its function is as follows. Component of the PAF1 complex which is a multifunctional complex involved in transcription initiation via genetic interactions with TATA-binding proteins, elongation and transcription-coupled histone modification. This Caenorhabditis elegans protein is Cell division cycle protein 73.